The chain runs to 151 residues: Putative pre-16S rRNA nuclease (151 aa).

This sequence belongs to the YqgF nuclease family.

It localises to the cytoplasm. Could be a nuclease involved in processing of the 5'-end of pre-16S rRNA. This chain is Putative pre-16S rRNA nuclease, found in Nostoc sp. (strain PCC 7120 / SAG 25.82 / UTEX 2576).